The following is a 121-amino-acid chain: MALTNEEILNAVAEKTVLELVELISAFEEKFNVSAAAVAVAAGPAAAAVEEQTEFNVELTSFGANKVAVIKAVREATGLGLKEAKDLVEGAPQVLKEGISKEEGEELKKKLEEAGATVTLK.

Belongs to the bacterial ribosomal protein bL12 family. Homodimer. Part of the ribosomal stalk of the 50S ribosomal subunit. Forms a multimeric L10(L12)X complex, where L10 forms an elongated spine to which 2 to 4 L12 dimers bind in a sequential fashion. Binds GTP-bound translation factors.

Forms part of the ribosomal stalk which helps the ribosome interact with GTP-bound translation factors. Is thus essential for accurate translation. The chain is Large ribosomal subunit protein bL12 from Acinetobacter baylyi (strain ATCC 33305 / BD413 / ADP1).